A 295-amino-acid polypeptide reads, in one-letter code: Nitrogenase iron protein (295 aa).

10-17 (GKGGIGKS) serves as a coordination point for ATP. Residue C98 participates in [4Fe-4S] cluster binding. R101 is modified (ADP-ribosylarginine; by dinitrogenase reductase ADP-ribosyltransferase). A [4Fe-4S] cluster-binding site is contributed by C133.

The protein belongs to the NifH/BchL/ChlL family. Homodimer. Requires [4Fe-4S] cluster as cofactor. Post-translationally, the reversible ADP-ribosylation of Arg-101 inactivates the nitrogenase reductase and regulates nitrogenase activity.

The enzyme catalyses N2 + 8 reduced [2Fe-2S]-[ferredoxin] + 16 ATP + 16 H2O = H2 + 8 oxidized [2Fe-2S]-[ferredoxin] + 2 NH4(+) + 16 ADP + 16 phosphate + 6 H(+). In terms of biological role, the key enzymatic reactions in nitrogen fixation are catalyzed by the nitrogenase complex, which has 2 components: the iron protein and the molybdenum-iron protein. In Tolumonas auensis (strain DSM 9187 / NBRC 110442 / TA 4), this protein is Nitrogenase iron protein.